A 405-amino-acid polypeptide reads, in one-letter code: S-adenosylmethionine sensor upstream of mTORC1 (405 aa).

The disordered stretch occupies residues 1-34; that stretch reads MEPGAGGRNTARAQRAGSPNTPPPREQERKLEQE. Residues 25–34 are compositionally biased toward basic and acidic residues; sequence REQERKLEQE. 6 residues coordinate S-adenosyl-L-methionine: Arg-95, Gly-172, Asp-190, Asp-202, Phe-203, and Ser-244.

The protein belongs to the BMT2/SAMTOR family. As to quaternary structure, interacts with the DEPDC5 subunit of the GATOR1 complex; interaction is disrupted when SAMTOR binds S-adenosyl-L-methionine. Interacts with the KICSTOR complex; interaction is disrupted when SAMTOR binds S-adenosyl-L-methionine.

S-adenosyl-L-methionine-binding protein that acts as an inhibitor of mTORC1 signaling via interaction with the GATOR1 and KICSTOR complexes. Acts as a sensor of S-adenosyl-L-methionine to signal methionine sufficiency to mTORC1: in presence of methionine, binds S-adenosyl-L-methionine, leading to disrupt interaction with the GATOR1 and KICSTOR complexes and promote mTORC1 signaling. Upon methionine starvation, S-adenosyl-L-methionine levels are reduced, thereby promoting the association with GATOR1 and KICSTOR, leading to inhibit mTORC1 signaling. Probably also acts as a S-adenosyl-L-methionine-dependent methyltransferase (Potential). The polypeptide is S-adenosylmethionine sensor upstream of mTORC1 (Homo sapiens (Human)).